We begin with the raw amino-acid sequence, 508 residues long: uncharacterized protein (508 aa).

Residues 3-163 (KAIAYMRFSS…LSWKKKRQDA (161 aa)) form the Resolvase/invertase-type recombinase catalytic domain. The active-site O-(5'-phospho-DNA)-serine intermediate is the serine 11. Residues 175-290 (PRWLSLDDKR…QEIRLAPFGI (116 aa)) constitute a DNA-binding region (recombinase).

This is an uncharacterized protein from Escherichia coli (strain K12).